The chain runs to 472 residues: Sulfate adenylyltransferase subunit 1 (472 aa).

One can recognise a tr-type G domain in the interval K24 to L240. The tract at residues G33–S40 is G1. G33–S40 lines the GTP pocket. Residues G91–D95 are G2. The tract at residues D112 to G115 is G3. GTP-binding positions include D112–H116 and N167–D170. The G4 stretch occupies residues N167–D170. The tract at residues S204–L206 is G5.

Belongs to the TRAFAC class translation factor GTPase superfamily. Classic translation factor GTPase family. CysN/NodQ subfamily. In terms of assembly, heterodimer composed of CysD, the smaller subunit, and CysN.

The catalysed reaction is sulfate + ATP + H(+) = adenosine 5'-phosphosulfate + diphosphate. It participates in sulfur metabolism; hydrogen sulfide biosynthesis; sulfite from sulfate: step 1/3. With CysD forms the ATP sulfurylase (ATPS) that catalyzes the adenylation of sulfate producing adenosine 5'-phosphosulfate (APS) and diphosphate, the first enzymatic step in sulfur assimilation pathway. APS synthesis involves the formation of a high-energy phosphoric-sulfuric acid anhydride bond driven by GTP hydrolysis by CysN coupled to ATP hydrolysis by CysD. The chain is Sulfate adenylyltransferase subunit 1 from Tolumonas auensis (strain DSM 9187 / NBRC 110442 / TA 4).